Consider the following 90-residue polypeptide: Small ribosomal subunit protein bS16 (90 aa).

Belongs to the bacterial ribosomal protein bS16 family.

This is Small ribosomal subunit protein bS16 from Lactobacillus gasseri (strain ATCC 33323 / DSM 20243 / BCRC 14619 / CIP 102991 / JCM 1131 / KCTC 3163 / NCIMB 11718 / NCTC 13722 / AM63).